We begin with the raw amino-acid sequence, 789 residues long: Probable phosphoketolase (789 aa).

Belongs to the XFP family. Thiamine diphosphate is required as a cofactor.

The sequence is that of Probable phosphoketolase from Brucella abortus (strain 2308).